A 970-amino-acid polypeptide reads, in one-letter code: Bifunctional glutamine synthetase adenylyltransferase/adenylyl-removing enzyme (970 aa).

Positions 1–454 (MNSLPPRPSL…HFQQVFAAPQ (454 aa)) are adenylyl removase. Positions 468–970 (QAVLASIWAG…WRRVMEEGKA (503 aa)) are adenylyl transferase.

Belongs to the GlnE family. Mg(2+) serves as cofactor.

The catalysed reaction is [glutamine synthetase]-O(4)-(5'-adenylyl)-L-tyrosine + phosphate = [glutamine synthetase]-L-tyrosine + ADP. It catalyses the reaction [glutamine synthetase]-L-tyrosine + ATP = [glutamine synthetase]-O(4)-(5'-adenylyl)-L-tyrosine + diphosphate. Its function is as follows. Involved in the regulation of glutamine synthetase GlnA, a key enzyme in the process to assimilate ammonia. When cellular nitrogen levels are high, the C-terminal adenylyl transferase (AT) inactivates GlnA by covalent transfer of an adenylyl group from ATP to specific tyrosine residue of GlnA, thus reducing its activity. Conversely, when nitrogen levels are low, the N-terminal adenylyl removase (AR) activates GlnA by removing the adenylyl group by phosphorolysis, increasing its activity. The regulatory region of GlnE binds the signal transduction protein PII (GlnB) which indicates the nitrogen status of the cell. The chain is Bifunctional glutamine synthetase adenylyltransferase/adenylyl-removing enzyme from Thioalkalivibrio sulfidiphilus (strain HL-EbGR7).